The chain runs to 354 residues: METAGLSFSRYFVVMNLLQMTIPSSEQFTVNSLERPVLAALGGNVELSCQLSPPQSAEHMEIRWFRSHYTRPVYLYKEGKDLYGETISKYVERTKLLKEAIGEGKVTLRILNVSADDDGQYHCFFKDGDVYEEAIAEVKVTATSLEIQILIHPPNTKGLLVECNSEGWFPQPQMEWRDSRGGIIPPSSKSHSQNGNKLFNMKMSLLLRDSSHGNITCYLRNPITGQEERTSIVLSDKLFSWDSVWILILVAILAVLLFFIMMPSVELQQREQRRCCDWNSPCLIGIGIVFSSMCVIIGLTITLHHRNRVPVSDRKFQLVSMYLEDMTVMVWVLMVFITMLISLVYFRLRGFFQI.

The region spanning 23–141 (PSSEQFTVNS…EEAIAEVKVT (119 aa)) is the Ig-like V-type 1 domain. Disulfide bonds link C49/C123 and C163/C217. Positions 161 to 233 (VECNSEGWFP…TGQEERTSIV (73 aa)) constitute an Ig-like C1-type 2 domain. 3 helical membrane-spanning segments follow: residues 243–263 (SVWI…IMMP), 283–303 (LIGI…TITL), and 326–346 (MTVM…LVYF).

Belongs to the SKINT family. As to expression, expressed in the thymus and skin.

It is found in the membrane. Its function is as follows. May act by engaging a cell surface molecule on immature T-cells in the embryonic thymus. This chain is Selection and upkeep of intraepithelial T-cells protein 1 (SKINT1), found in Macaca fascicularis (Crab-eating macaque).